The chain runs to 156 residues: Small ribosomal subunit protein uS7 (156 aa).

It belongs to the universal ribosomal protein uS7 family. As to quaternary structure, part of the 30S ribosomal subunit. Contacts proteins S9 and S11.

Its function is as follows. One of the primary rRNA binding proteins, it binds directly to 16S rRNA where it nucleates assembly of the head domain of the 30S subunit. Is located at the subunit interface close to the decoding center, probably blocks exit of the E-site tRNA. The chain is Small ribosomal subunit protein uS7 from Baumannia cicadellinicola subsp. Homalodisca coagulata.